Here is a 574-residue protein sequence, read N- to C-terminus: High-affinity methionine permease (574 aa).

Topologically, residues 1-61 (MSEGRTFLSQ…TELDQGEKQL (61 aa)) are cytoplasmic. Lys28 is covalently cross-linked (Glycyl lysine isopeptide (Lys-Gly) (interchain with G-Cter in ubiquitin)). A helical transmembrane segment spans residues 62–82 (GILSCIGLICNRMLGTGVFAV). Over 83–92 (SSTIYTLCGS) the chain is Extracellular. The helical transmembrane segment at 93–113 (VGLALIMWAVGAIIAISGLYV) threads the bilayer. At 114–140 (YMEFGTAIPKNGGEKNYLEAIFRKPKF) the chain is on the cytoplasmic side. The chain crosses the membrane as a helical span at residues 141 to 161 (FITCMYAAYIFFLGWAAGNSI). The Extracellular portion of the chain corresponds to 162 to 182 (NTAIMFLTAADTEVTKWNQRG). The helical transmembrane segment at 183-203 (IGVAVVFFAFLINSLNVKIGL) threads the bilayer. Over 204-207 (YLQN) the chain is Cytoplasmic. Residues 208 to 228 (ILGIFKIGIVLFISITGWVAL) traverse the membrane as a helical segment. Topologically, residues 229-293 (GGGLKDGYQS…VRTLKIAGPT (65 aa)) are extracellular. A helical membrane pass occupies residues 294-314 (SMVFLAIIYIFVNIAYFAVVP). Residues 315–340 (KDKLISSKLILAADFFDIVFGGQAKR) lie on the Cytoplasmic side of the membrane. A helical membrane pass occupies residues 341–361 (AAAALVGLSALGNVLSVIFSQ). The Extracellular portion of the chain corresponds to 362 to 418 (GRIIQQLGREGVLPFSNFFASSKPFNSPMVGLFQHFIVCTVTILAPPPGDAYLLVQN). A helical transmembrane segment spans residues 419 to 439 (LISYPMNIINFAISAGLLWIY). Residues 440 to 455 (WQRRQGKIEWNPPIKA) are Cytoplasmic-facing. The chain crosses the membrane as a helical span at residues 456 to 476 (GVFVTGFFTLSNLYLIIAPYV). The Extracellular segment spans residues 477–490 (PPSNGESVYSSMPY). The chain crosses the membrane as a helical span at residues 491–511 (WIHCVIAWGIFFFGGVYYVVW). Residues 512–574 (AQLLPRWGHY…HYKSEQEKSL (63 aa)) are Cytoplasmic-facing. Thr552 carries the post-translational modification Phosphothreonine. Phosphoserine is present on Ser573.

It to yeast low affinity methionine permease (MUP3).

The protein resides in the membrane. Its function is as follows. High affinity permease for methionine. This chain is High-affinity methionine permease (MUP1), found in Saccharomyces cerevisiae (strain ATCC 204508 / S288c) (Baker's yeast).